The chain runs to 243 residues: Cell division protein FtsQ (243 aa).

Residues 1–19 are Cytoplasmic-facing; sequence MKRYNAKRKTHRNLKSIKK. A helical transmembrane segment spans residues 20–40; that stretch reads LIPTVLALLAFVSLLAGIITL. The Periplasmic segment spans residues 41–243; that stretch reads HNPKTLPFRQ…SNGLAIQWKN (203 aa). The region spanning 46–115 is the POTRA domain; the sequence is LPFRQIKITV…NELEIQVEEQ (70 aa).

It belongs to the FtsQ/DivIB family. FtsQ subfamily. In terms of assembly, part of a complex composed of FtsB, FtsL and FtsQ.

Its subcellular location is the cell inner membrane. In terms of biological role, essential cell division protein. May link together the upstream cell division proteins, which are predominantly cytoplasmic, with the downstream cell division proteins, which are predominantly periplasmic. May control correct divisome assembly. This chain is Cell division protein FtsQ, found in Coxiella burnetii (strain RSA 493 / Nine Mile phase I).